A 203-amino-acid chain; its full sequence is Guanylate kinase (203 aa).

Residues 3–181 enclose the Guanylate kinase-like domain; it reads GSLFIVAAPS…AHTDLRAIVQ (179 aa). 10-17 contacts ATP; sequence APSGAGKT.

This sequence belongs to the guanylate kinase family.

Its subcellular location is the cytoplasm. It catalyses the reaction GMP + ATP = GDP + ADP. In terms of biological role, essential for recycling GMP and indirectly, cGMP. In Nitrosococcus oceani (strain ATCC 19707 / BCRC 17464 / JCM 30415 / NCIMB 11848 / C-107), this protein is Guanylate kinase.